We begin with the raw amino-acid sequence, 345 residues long: Phenylalanine--tRNA ligase alpha subunit (345 aa).

E253 contributes to the Mg(2+) binding site.

This sequence belongs to the class-II aminoacyl-tRNA synthetase family. Phe-tRNA synthetase alpha subunit type 1 subfamily. Tetramer of two alpha and two beta subunits. Requires Mg(2+) as cofactor.

The protein localises to the cytoplasm. The catalysed reaction is tRNA(Phe) + L-phenylalanine + ATP = L-phenylalanyl-tRNA(Phe) + AMP + diphosphate + H(+). This Lawsonia intracellularis (strain PHE/MN1-00) protein is Phenylalanine--tRNA ligase alpha subunit.